Reading from the N-terminus, the 209-residue chain is MQTLRREAARPYVPSGTLEASFPAPLYSDDYLSLEGPRWPLVIRQATRWKYTPMGRDAAGQLWYTGLTNSDTREAWYNLPLDPASPFREAYNRWHGCYQRREHTMPSAYTQHLRETAWHDPIIPAQYQVPSTRWGSTLWKDRPIRGKEYVINRNRYGVEPLWRASDYVPSLSAPQRPPGTTQNYREWGLEPYCPSTCQRPLPSSTPMPR.

Microtubule inner protein component of sperm flagellar doublet microtubules.

Its subcellular location is the cytoplasm. It is found in the cytoskeleton. It localises to the cilium axoneme. The protein localises to the flagellum axoneme. Its function is as follows. Microtubule inner protein (MIP) part of the dynein-decorated doublet microtubules (DMTs) in cilia axoneme, which is required for motile cilia beating. Located at the center of the tektin bundle where may function to recruit tektins or stabilize the bundle. The polypeptide is Tektin bundle-interacting protein 1 (TEKTIP1) (Macaca fascicularis (Crab-eating macaque)).